A 137-amino-acid chain; its full sequence is NADH dehydrogenase [ubiquinone] 1 beta subcomplex subunit 7 (137 aa).

Gly2 is lipidated: N-myristoyl glycine. The 43-residue stretch at 56 to 98 (RDYCAHYLIRLLKCKRDSFPNFXACKQERHDWDYCEHRDYVMR) folds into the CHCH domain. A Cx9C motif 1 motif is present at residues 59–69 (CAHYLIRLLKC). 2 disulfides stabilise this stretch: Cys59–Cys90 and Cys69–Cys80. Ser73 bears the Phosphoserine mark. The Cx9C motif 2 signature appears at 80-90 (CKQERHDWDYC). The tract at residues 113-137 (KRREKKAAELAKGQGPGEVDPKVAL) is disordered.

This sequence belongs to the complex I NDUFB7 subunit family. As to quaternary structure, complex I is composed of 45 different subunits.

It is found in the mitochondrion inner membrane. The protein localises to the mitochondrion intermembrane space. In terms of biological role, accessory subunit of the mitochondrial membrane respiratory chain NADH dehydrogenase (Complex I), that is believed not to be involved in catalysis. Complex I functions in the transfer of electrons from NADH to the respiratory chain. The immediate electron acceptor for the enzyme is believed to be ubiquinone. This chain is NADH dehydrogenase [ubiquinone] 1 beta subcomplex subunit 7 (NDUFB7), found in Pan troglodytes (Chimpanzee).